The sequence spans 130 residues: Hypocretin neuropeptide precursor (130 aa).

The N-terminal stretch at 1-32 (MNPPSTKVPWAAVTLLLLLLLPPALLSPGAAA) is a signal peptide. At Gln33 the chain carries Pyrrolidone carboxylic acid. 2 disulfides stabilise this stretch: Cys38–Cys44 and Cys39–Cys46. Leu65 carries the post-translational modification Leucine amide. Met96 carries the methionine amide modification. Residues 97 to 130 (GRRAGAEPAPRPCPGRRCPVVAVPSAAPGGRSGV) constitute a propeptide, removed in mature form.

The protein belongs to the orexin family. In terms of processing, specific enzymatic cleavages at paired basic residues yield the different active peptides.

It localises to the rough endoplasmic reticulum. The protein localises to the cytoplasmic vesicle. It is found in the synapse. Neuropeptides that play a significant role in the regulation of food intake and sleep-wakefulness, possibly by coordinating the complex behavioral and physiologic responses of these complementary homeostatic functions. A broader role in the homeostatic regulation of energy metabolism, autonomic function, hormonal balance and the regulation of body fluids, is also suggested. In terms of biological role, binds to orexin receptors HCRTR1/OX1R and HCRTR2/OX2R with a high affinity. Stimulates food intake. Modulates pituitary luteinizing hormone secretion in an ovarian steroid-dependent manner. Its function is as follows. Binds to orexin receptor HCRTR2/OX2R only. Stimulates food intake. Modulates pituitary luteinizing hormone secretion in an ovarian steroid-dependent manner. In Canis lupus familiaris (Dog), this protein is Hypocretin neuropeptide precursor (HCRT).